A 614-amino-acid polypeptide reads, in one-letter code: UvrABC system protein C (614 aa).

One can recognise a GIY-YIG domain in the interval 14–91 (TSPGCYIHKD…IKENKPKYNI (78 aa)). The region spanning 196-231 (DKIIDDLKSKMAVAAQSMEFERAAEYRDLIQAIGTL) is the UVR domain. A disordered region spans residues 595-614 (LPQVAEERVDYQTEGNHNEP). Residues 599-614 (AEERVDYQTEGNHNEP) show a composition bias toward basic and acidic residues.

This sequence belongs to the UvrC family. Interacts with UvrB in an incision complex.

It localises to the cytoplasm. Its function is as follows. The UvrABC repair system catalyzes the recognition and processing of DNA lesions. UvrC both incises the 5' and 3' sides of the lesion. The N-terminal half is responsible for the 3' incision and the C-terminal half is responsible for the 5' incision. The polypeptide is UvrABC system protein C (Streptococcus pneumoniae serotype 4 (strain ATCC BAA-334 / TIGR4)).